Reading from the N-terminus, the 402-residue chain is Xylose/arabinose-binding protein XylF (402 aa).

A helical transmembrane segment spans residues 38–58 (GIIAGVLAAFGAGFGSGYVTA).

This sequence belongs to the bacterial solute-binding protein 2 family. In terms of assembly, the complex is composed of two ATP-binding proteins (XylG), two transmembrane proteins (XylH) and a solute-binding protein (XylF).

It localises to the cell membrane. Part of the ABC transporter complex XylFGH involved in the uptake of xylose and arabinose. The sequence is that of Xylose/arabinose-binding protein XylF from Sulfolobus acidocaldarius (strain ATCC 33909 / DSM 639 / JCM 8929 / NBRC 15157 / NCIMB 11770).